Here is a 519-residue protein sequence, read N- to C-terminus: MLQMKQPLQNLNQSQKTALAGVFVLLFPILYPNLFSPLGRASPSLFSEWNAPRPRHLSLLQGALDRQISIRQQVELWSPLADQGWKPCTESYRGASLPEKSEGFLQVFLDGGLNQQRMGICDAVAVAKIMNVTLVIPRLEVNTVWQDSSSFTDIFDLDHFISVLKDEVRIVRELPIQYAWSTRDYYATGIRATRIKTAPVHASAEWYLENVLPIIQSYGIAAVAPFSHRLAFDNLPESIQRLRCKVNFEALNFVPHIRELGDALVHRLRNPPSSSQTSGTMDPTDRINTIVKAGAGKFAVLHLRFDKDMAAHSGCDFEGGKAEKLALAKYRQVIWQGRVLNSQFTDEELRNKGRCPLTPEEIGLLLSALGFSNNTRLYLASHQVYGGEARISTLRKLFPGIENKKSLASAEELADVQGKASLMAAVDYYVSMKSDIFISASPGNMHNALQAHRAYLNLKTIRPNMILLGQVFVNKSLDWSEFEGAVMNGHKNRQGQLRLRKQKQSIYTYPAPDCMCKVA.

Residues 18 to 38 form a helical; Signal-anchor for type II membrane protein membrane-spanning segment; the sequence is ALAGVFVLLFPILYPNLFSPL. A glycan (N-linked (GlcNAc...) asparagine) is linked at N131. 302-304 contributes to the substrate binding site; the sequence is HLR. N-linked (GlcNAc...) asparagine glycosylation is found at N373 and N474.

It belongs to the glycosyltransferase GT106 family.

Its subcellular location is the membrane. Its pathway is glycan metabolism. In Arabidopsis thaliana (Mouse-ear cress), this protein is O-fucosyltransferase 31.